The chain runs to 116 residues: Ribosome-binding factor A (116 aa).

Belongs to the RbfA family. In terms of assembly, monomer. Binds 30S ribosomal subunits, but not 50S ribosomal subunits or 70S ribosomes.

The protein resides in the cytoplasm. Functionally, one of several proteins that assist in the late maturation steps of the functional core of the 30S ribosomal subunit. Associates with free 30S ribosomal subunits (but not with 30S subunits that are part of 70S ribosomes or polysomes). Required for efficient processing of 16S rRNA. May interact with the 5'-terminal helix region of 16S rRNA. The sequence is that of Ribosome-binding factor A from Pediococcus pentosaceus (strain ATCC 25745 / CCUG 21536 / LMG 10740 / 183-1w).